The sequence spans 138 residues: Putative pre-16S rRNA nuclease (138 aa).

Belongs to the YqgF nuclease family.

It localises to the cytoplasm. Could be a nuclease involved in processing of the 5'-end of pre-16S rRNA. This Klebsiella pneumoniae subsp. pneumoniae (strain ATCC 700721 / MGH 78578) protein is Putative pre-16S rRNA nuclease.